The primary structure comprises 222 residues: Prolactin-3B1 (222 aa).

A signal peptide spans 1–31; that stretch reads MKLSLSQPCSFSGALLLLAVSNLLVWEKVTS. Disulfide bonds link Cys-82/Cys-197 and Cys-214/Cys-222.

It belongs to the somatotropin/prolactin family.

It localises to the secreted. This chain is Prolactin-3B1 (Prl3b1), found in Mus musculus (Mouse).